Consider the following 406-residue polypeptide: MEGMNMGSSMNMDAMSSASKTVASSMASMSMDAMSSASKTILSSMSSMSMEAMSSASKTLASTMSSMASMSMGSSSMSGMSMSMSSTPTSSASAQTTSDSSMSGMSGMSSSDNSSSSGMDMDMSMGMNYYLTPTYKNYPVLFHHLHANNSGKAFGIFLLFVVAAFVYKLLLFVSWCLEVHWFKKWDKQNKYSTLPSANSKDEGKHYDTENNFEIQGLPKLPNLLSDIFVPSLMDLFHDIIRAFLVFTSTMIIYMLMLATMSFVLTYVFAVITGLALSEVFFNRCKIAMLKRWDIQREIQKAKSCPGFGNCQCGRHPEPSPDPIAVADTTSGSDQSTRLEKNNESKVAISENNQKKTPTQEEGCNCATDSGKNQANIERDILENSKLQEQSGNMDQNLLPAEKFTHN.

Topologically, residues 1 to 152 are cytoplasmic; sequence MEGMNMGSSM…HHLHANNSGK (152 aa). Repeat copies occupy residues 9 to 27, 28 to 46, and 47 to 65. Residues 9 to 65 form a 3 X 19 AA tandem repeats of S-M-X-M-X-A-M-S-S-A-S-K-T-X-X-S-X-M-X region; it reads SMNMDAMSSASKTVASSMASMSMDAMSSASKTILSSMSSMSMEAMSSASKTLASTMS. The segment at 71-117 is disordered; the sequence is SMGSSSMSGMSMSMSSTPTSSASAQTTSDSSMSGMSGMSSSDNSSSS. The chain crosses the membrane as a helical span at residues 153 to 173; it reads AFGIFLLFVVAAFVYKLLLFV. The Extracellular segment spans residues 174–250; it reads SWCLEVHWFK…RAFLVFTSTM (77 aa). A helical membrane pass occupies residues 251-271; sequence IIYMLMLATMSFVLTYVFAVI. Residues 272–406 are Cytoplasmic-facing; that stretch reads TGLALSEVFF…LLPAEKFTHN (135 aa). The REP-III motif lies at 304–315; sequence CPGFGNCQCGRH. Residues 318-406 form a disordered region; sequence PSPDPIAVAD…LLPAEKFTHN (89 aa). Ser-344 carries the post-translational modification Phosphoserine. A Glycyl lysine isopeptide (Lys-Gly) (interchain with G-Cter in ubiquitin) cross-link involves residue Lys-345. Ser-349 bears the Phosphoserine mark. Composition is skewed to polar residues over residues 349–375 and 384–395; these read SENNQKKTPTQEEGCNCATDSGKNQAN and SKLQEQSGNMDQ. Thr-356 carries the phosphothreonine modification. Ser-369 is modified (phosphoserine).

In terms of assembly, homooligomer. Extensively O-glycosylated.

It localises to the cell membrane. The catalysed reaction is Cu(2+)(in) = Cu(2+)(out). In terms of biological role, high-affinity copper transporter of plasma membrane that mediates copper uptake under low copper conditions. Copper transport through the high affinity system requiring CTRl supplies the iron transport multicopper ferroxidase FET3 with copper, which in turn is required for ferrous iron uptake. The energy for translocation is unlikely to be directly derived from ATP hydrolysis and the exact mechanism driving the transmembrane transport of copper has still to be determined. Binds 4 copper ions via its C-terminal cystein-rich domain and is able to deliver Cu(I) directly to both the chaperone ATX1 and to an N-terminal domain of the CCC2 protein. Also able to mediate the uptake of the anticancer drug cisplatin. The protein is Copper transport protein CTR1 of Saccharomyces cerevisiae (strain ATCC 204508 / S288c) (Baker's yeast).